We begin with the raw amino-acid sequence, 197 residues long: Large ribosomal subunit protein uL11 (197 aa).

It belongs to the universal ribosomal protein uL11 family. In terms of assembly, part of the ribosomal stalk of the 50S ribosomal subunit. Interacts with L10 and the large rRNA to form the base of the stalk. L10 forms an elongated spine to which L12 dimers bind in a sequential fashion forming a multimeric L10(L12)X complex. Post-translationally, one or more lysine residues are methylated.

In terms of biological role, forms part of the ribosomal stalk which helps the ribosome interact with GTP-bound translation factors. This chain is Large ribosomal subunit protein uL11, found in Mycoplasmopsis pulmonis (strain UAB CTIP) (Mycoplasma pulmonis).